The primary structure comprises 185 residues: Photosystem I assembly protein Ycf4 (185 aa).

2 helical membrane passes run 24–44 (YLIG…SISS) and 66–86 (IIMG…WYLV).

This sequence belongs to the Ycf4 family.

It is found in the cellular thylakoid membrane. Its function is as follows. Seems to be required for the assembly of the photosystem I complex. The polypeptide is Photosystem I assembly protein Ycf4 (Prochlorococcus marinus (strain MIT 9515)).